We begin with the raw amino-acid sequence, 534 residues long: Acetyltransferase MATC1 (534 aa).

Active-site proton acceptor residues include H186 and D459.

The protein belongs to the plant acyltransferase family.

Its subcellular location is the cell membrane. It participates in secondary metabolite biosynthesis. Functionally, acetyltransferase; part of the gene cluster that mediates the biosynthesis of mannosylerythritol lipids (MELs), surface-active substances that enhance the availability of water-insoluble substrates. Mannosylerythritol lipid production is responsible for hemolytic activity of Ustilago maydis. Depending on the number of acetyl groups, mannosylerythritol lipids can be differentiated into MEL A (fully acetylated), MEL B and MEL C (monoacetylated at R-6 and R-4, respectively), and the fully deacetylated MEL D. The first step in the pathway is the generation of mannosylerythritol by the glycosyltransferase EMT1 which catalyzes the transfer of GDP-mannose to the C-4 atom of meso-erythritol. This reaction has to be stereospecific, since only mannosyl-D-erythritol is generated. The produced disaccharide is subsequently acylated with fatty acids of various lengths derived from the peroxisomal beta-oxidation by the peroxisomal acyltransferases MAC1 and MAC2 at positions C-2 and C-3, repectively. The existence of MEL derivatives which carry an acetyl group at C-2 implies that at least MAC1 also accepts acetyl-CoA as a donor. The final step of MEL biosynthesis is the acetylation of the fully acylated mannosylerythritol lipids catalyzed by the acetyl-CoA-dependent acetyltransferase MAT1. MAT1 displays a relaxed regioselectivity and is able to transfer acetylgroups to both positions C-4 and C-6 of the mannosyl moiety. This Mycosarcoma maydis (Corn smut fungus) protein is Acetyltransferase MATC1.